Reading from the N-terminus, the 137-residue chain is Hydrogenase-4 component J (137 aa).

To E.coli HycH.

Possible component of hydrogenase 4. This Escherichia coli (strain K12) protein is Hydrogenase-4 component J.